Reading from the N-terminus, the 201-residue chain is Cardiotrophin-1 (201 aa).

The protein belongs to the IL-6 superfamily. Highly expressed in heart, skeletal muscle, prostate and ovary. Lower levels in lung, kidney, pancreas, thymus, testis and small intestine. Little or no expression in brain, placenta, liver, spleen, colon or peripheral blood leukocytes.

It is found in the secreted. In terms of biological role, induces cardiac myocyte hypertrophy in vitro. Binds to and activates the ILST/gp130 receptor. In Homo sapiens (Human), this protein is Cardiotrophin-1 (CTF1).